Consider the following 951-residue polypeptide: Serine/threonine-protein phosphatase 4 regulatory subunit 1 (951 aa).

7 HEAT repeats span residues 26 to 63 (ESDV…VFNR), 82 to 119 (RDCI…FCQE), 127 to 164 (AFSK…QELI), 168 to 206 (DVET…MVGK), 208 to 246 (ITER…VVGQ), 248 to 285 (ATEE…ATCQ), and 287 to 324 (IRRT…TFAN). Disordered stretches follow at residues 326-395 (SSSG…DMRV), 407-501 (SESP…MATR), 539-569 (HDEA…SISE), and 592-612 (GGAD…ERRP). Composition is skewed to basic and acidic residues over residues 332-360 (FKDE…RPED), 464-483 (DLDK…ERTG), and 539-551 (HDEA…RSEL). Residues 502–539 (KELEEMIENLEPHMDDPDVKAQVEVLSAALRASTLDAH) form an HEAT 8 repeat. The segment covering 594-604 (ADVGPGGGGGF) has biased composition (gly residues). HEAT repeat units follow at residues 699 to 735 (LTAA…LLHI), 777 to 815 (RDVY…KLHM), 820 to 858 (TFGV…DDCL), and 862 to 899 (QFAV…EKEY). Residue serine 936 is modified to Phosphoserine.

Serine/threonine-protein phosphatase 4 (PP4) occurs in different assemblies of the catalytic and one or more regulatory subunits. Component of the PP4 complex PPP4C-PPP4R1. Interacts with HDAC3.

Functionally, regulatory subunit of serine/threonine-protein phosphatase 4. May play a role in regulation of cell division in renal glomeruli. The PPP4C-PPP4R1 PP4 complex may play a role in dephosphorylation and regulation of HDAC3. Plays a role in the inhibition of TNF-induced NF-kappa-B activation by regulating the dephosphorylation of TRAF2. The chain is Serine/threonine-protein phosphatase 4 regulatory subunit 1 (Ppp4r1) from Rattus norvegicus (Rat).